Consider the following 186-residue polypeptide: Ribosome-recycling factor (186 aa).

The protein belongs to the RRF family.

Its subcellular location is the cytoplasm. Functionally, responsible for the release of ribosomes from messenger RNA at the termination of protein biosynthesis. May increase the efficiency of translation by recycling ribosomes from one round of translation to another. This is Ribosome-recycling factor from Rickettsia prowazekii (strain Madrid E).